A 323-amino-acid polypeptide reads, in one-letter code: Protoheme IX farnesyltransferase (323 aa).

A run of 9 helical transmembrane segments spans residues 28–48, 50–70, 99–119, 122–142, 150–170, 178–198, 223–243, 244–264, and 279–299; these read IIPL…NGQV, PVLL…AQTL, HALI…VVFV, ASAL…THML, IVIG…AVTG, ALFA…ALMI, IWIY…PLAA, SGIV…YKTW, and LFKY…VDSL.

This sequence belongs to the UbiA prenyltransferase family. Protoheme IX farnesyltransferase subfamily.

The protein resides in the cell inner membrane. It carries out the reaction heme b + (2E,6E)-farnesyl diphosphate + H2O = Fe(II)-heme o + diphosphate. The protein operates within porphyrin-containing compound metabolism; heme O biosynthesis; heme O from protoheme: step 1/1. Functionally, converts heme B (protoheme IX) to heme O by substitution of the vinyl group on carbon 2 of heme B porphyrin ring with a hydroxyethyl farnesyl side group. The protein is Protoheme IX farnesyltransferase of Gloeothece citriformis (strain PCC 7424) (Cyanothece sp. (strain PCC 7424)).